The primary structure comprises 959 residues: Lon protease homolog, mitochondrial (959 aa).

Residues 1–67 constitute a mitochondrion transit peptide; that stretch reads MAASTGYVRL…GPAIGGQWRG (67 aa). Disordered regions lie at residues 77–102 and 218–257; these read GAFS…GSAG and RQLE…HPAE. A compositionally biased stretch (gly residues) spans 91–102; it reads EEGAGGAGGSAG. The 247-residue stretch at 124 to 370 folds into the Lon N-terminal domain; sequence LPLIAITRNP…KALSLLKKEF (247 aa). Over residues 233–243 the composition is skewed to basic residues; it reads HKPRRKSKRGK. The segment covering 244–256 has biased composition (basic and acidic residues); sequence KEAEDELSARHPA. Residue 523 to 530 participates in ATP binding; it reads GPPGVGKT. Positions 759 to 949 constitute a Lon proteolytic domain; it reads VTPPGVVMGL…REIFDIAFPD (191 aa). Active-site residues include S855 and K898.

The protein belongs to the peptidase S16 family. As to quaternary structure, homohexamer. Organized in a ring with a central cavity. The ATP-binding and proteolytic domains (AP-domain) form a hexameric chamber, while the N-terminal domain is arranged as a trimer of dimers. DNA and RNA binding is stimulated by substrate and inhibited by ATP binding. Interacts with TWNK and mitochondrial DNA polymerase subunit POLG. As to expression, duodenum, heart, lung and liver, but not thymus.

The protein localises to the mitochondrion matrix. The catalysed reaction is Hydrolysis of proteins in presence of ATP.. Its activity is regulated as follows. Peptidase activity is subject to substrate inhibition by ATP. ATP-dependent serine protease that mediates the selective degradation of misfolded, unassembled or oxidatively damaged polypeptides as well as certain short-lived regulatory proteins in the mitochondrial matrix. Endogenous substrates include mitochondrial steroidogenic acute regulatory (StAR) protein, DELE1, helicase Twinkle (TWNK) and the large ribosomal subunit protein MRPL32/bL32m. MRPL32/bL32m is protected from degradation by LONP1 when it is bound to a nucleic acid (RNA), but TWNK is not. May also have a chaperone function in the assembly of inner membrane protein complexes. Participates in the regulation of mitochondrial gene expression and in the maintenance of the integrity of the mitochondrial genome. Binds to mitochondrial promoters and RNA in a single-stranded, site-specific, and strand-specific manner. May regulate mitochondrial DNA replication and/or gene expression using site-specific, single-stranded DNA binding to target the degradation of regulatory proteins binding to adjacent sites in mitochondrial promoters. In Homo sapiens (Human), this protein is Lon protease homolog, mitochondrial.